The chain runs to 212 residues: MKSKFVVIEGLEGAGKTTARDTVVDVLREHGINDIAFTREPGGTPLAEKLRDLFKRGVEGELPTIKAEVLMLYAARVQLVETVIKPALARGAWVVGDRHDLSSQAYQGGGRGVDQQLMASLRDTVLGEFRPDLTLYLDLPPIVGLQRARARGELDRIEQEALPFFERTRARYRELAAQDASIITVDASQSLDQVTAAIRRCVSQWLQQQEGA.

Residue 10–17 (GLEGAGKT) coordinates ATP.

The protein belongs to the thymidylate kinase family.

It carries out the reaction dTMP + ATP = dTDP + ADP. Functionally, phosphorylation of dTMP to form dTDP in both de novo and salvage pathways of dTTP synthesis. The protein is Thymidylate kinase of Serratia proteamaculans (strain 568).